A 342-amino-acid polypeptide reads, in one-letter code: Epoxide hydrolase srdG (342 aa).

The region spanning 44–332 is the AB hydrolase-1 domain; that stretch reads ATVLLLHGWP…LIHTPEEVNK (289 aa). The Nucleophile role is filled by aspartate 122. The Proton acceptor role is filled by histidine 320.

The protein belongs to the AB hydrolase superfamily. Epoxide hydrolase family.

In terms of biological role, highly reducing polyketide synthase; part of the gene cluster that mediates the biosynthesis of sordarial, a salicylic aldehyde structurally related to the phytotoxin pyriculol. The most interesting aspect of this pathway is formation of an aromatic product from the highly reducing polyketide synthase srdA. SrdA synthesizes a reduced polyketide chain from one molecule of acetyl-CoA and five molecules of malonyl-CoA. The polyketide chain is then reductively released as an aldehyde. The oxidoreductases srdC, srdD and srdE then oxidize one of the hydroxy groups to facilitate the intramolecular aldol condensation, followed by dehydration to yield a salicylic aldehyde. This aldehyde can undergo facile reduction by endogenous reductases to yield the alcohol 1-hydroxy-2-hydroxymethyl-3-pent-1,3-dienylbenzene. The flavin-dependent srdI counteract against the propensity of the aldehydes to be reduced under physiological conditions and is responsible for reoxidizing 1-hydroxy-2-hydroxymethyl-3-pent-1,3-dienylbenzene back to the salicylic aldehyde. This salicylic aldehyde is then selectively epoxidized by the cupin-domain-containing oxidoreductase srdB to yield the epoxide, which can be hydrolyzed stereoselectively by the hydrolase srdG to give the final product sordarial. In Neurospora crassa (strain ATCC 24698 / 74-OR23-1A / CBS 708.71 / DSM 1257 / FGSC 987), this protein is Epoxide hydrolase srdG.